Consider the following 248-residue polypeptide: 2,3-bisphosphoglycerate-dependent phosphoglycerate mutase (248 aa).

Substrate-binding positions include 8-15 (RHGESTWN), 21-22 (TG), arginine 60, 87-90 (ERHY), lysine 98, 114-115 (RR), and 183-184 (GN). The active-site Tele-phosphohistidine intermediate is the histidine 9. Catalysis depends on glutamate 87, which acts as the Proton donor/acceptor.

Belongs to the phosphoglycerate mutase family. BPG-dependent PGAM subfamily. As to quaternary structure, homodimer.

The enzyme catalyses (2R)-2-phosphoglycerate = (2R)-3-phosphoglycerate. It participates in carbohydrate degradation; glycolysis; pyruvate from D-glyceraldehyde 3-phosphate: step 3/5. Catalyzes the interconversion of 2-phosphoglycerate and 3-phosphoglycerate. In Burkholderia vietnamiensis (strain G4 / LMG 22486) (Burkholderia cepacia (strain R1808)), this protein is 2,3-bisphosphoglycerate-dependent phosphoglycerate mutase.